The following is a 342-amino-acid chain: Glyceraldehyde-3-phosphate dehydrogenase (342 aa).

Residues 12–13, Asp34, Lys78, and Thr120 each bind NAD(+); that span reads RI. Residues 151–153 and Thr182 each bind D-glyceraldehyde 3-phosphate; that span reads SCT. Catalysis depends on Cys152, which acts as the Nucleophile. Residue Asn183 participates in NAD(+) binding. Residues Arg197, 210-211, and Arg233 contribute to the D-glyceraldehyde 3-phosphate site; that span reads TG. Asn322 serves as a coordination point for NAD(+).

The protein belongs to the glyceraldehyde-3-phosphate dehydrogenase family. As to quaternary structure, homotetramer.

It is found in the cytoplasm. It catalyses the reaction D-glyceraldehyde 3-phosphate + phosphate + NAD(+) = (2R)-3-phospho-glyceroyl phosphate + NADH + H(+). It functions in the pathway carbohydrate degradation; glycolysis; pyruvate from D-glyceraldehyde 3-phosphate: step 1/5. In terms of biological role, catalyzes the oxidative phosphorylation of glyceraldehyde 3-phosphate (G3P) to 1,3-bisphosphoglycerate (BPG) using the cofactor NAD. The first reaction step involves the formation of a hemiacetal intermediate between G3P and a cysteine residue, and this hemiacetal intermediate is then oxidized to a thioester, with concomitant reduction of NAD to NADH. The reduced NADH is then exchanged with the second NAD, and the thioester is attacked by a nucleophilic inorganic phosphate to produce BPG. The sequence is that of Glyceraldehyde-3-phosphate dehydrogenase (gap) from Aquifex aeolicus (strain VF5).